Consider the following 78-residue polypeptide: Large ribosomal subunit protein bL28 (78 aa).

Residues Met-1–His-20 form a disordered region.

It belongs to the bacterial ribosomal protein bL28 family.

The polypeptide is Large ribosomal subunit protein bL28 (Stutzerimonas stutzeri (strain A1501) (Pseudomonas stutzeri)).